We begin with the raw amino-acid sequence, 382 residues long: Ribosomal RNA large subunit methyltransferase G (382 aa).

This sequence belongs to the methyltransferase superfamily. RlmG family.

The protein resides in the cytoplasm. It catalyses the reaction guanosine(1835) in 23S rRNA + S-adenosyl-L-methionine = N(2)-methylguanosine(1835) in 23S rRNA + S-adenosyl-L-homocysteine + H(+). Specifically methylates the guanine in position 1835 (m2G1835) of 23S rRNA. This is Ribosomal RNA large subunit methyltransferase G from Pseudoalteromonas translucida (strain TAC 125).